The primary structure comprises 285 residues: Cytosolic Fe-S cluster assembly factor CFD1 (285 aa).

30 to 37 contributes to the ATP binding site; sequence GKGGVGKS. Positions 206 and 209 each coordinate [4Fe-4S] cluster.

The protein belongs to the Mrp/NBP35 ATP-binding proteins family. NUBP2/CFD1 subfamily. In terms of assembly, heterotetramer of 2 NBP35 and 2 CFD1 chains. It depends on [4Fe-4S] cluster as a cofactor.

The protein localises to the cytoplasm. Its function is as follows. Component of the cytosolic iron-sulfur (Fe/S) protein assembly (CIA) machinery. Required for maturation of extramitochondrial Fe-S proteins. The NBP35-CFD1 heterotetramer forms a Fe-S scaffold complex, mediating the de novo assembly of an Fe-S cluster and its transfer to target apoproteins. Required for biogenesis and export of both ribosomal subunits, which may reflect a role in assembly of the Fe/S clusters in RLI1, a protein which performs rRNA processing and ribosome export. In Candida glabrata (strain ATCC 2001 / BCRC 20586 / JCM 3761 / NBRC 0622 / NRRL Y-65 / CBS 138) (Yeast), this protein is Cytosolic Fe-S cluster assembly factor CFD1.